A 393-amino-acid polypeptide reads, in one-letter code: Bifunctional enzyme Fae/Hps (393 aa).

Positions 1–161 (MYLIGEALIG…HEKDRAAHAV (161 aa)) are formaldehyde-activating enzyme. Histidine 17 (proton donor) is an active-site residue. Substrate is bound by residues aspartate 19, leucine 48, lysine 66, threonine 68, and glutamine 83. Residues 162–393 (MGFKVPRLWD…IDQFRIMTDF (232 aa)) form a 3-hexulose-6-phosphate synthase region.

It in the N-terminal section; belongs to the formaldehyde-activating enzyme family. In the C-terminal section; belongs to the HPS/KGPDC family. HPS subfamily.

The catalysed reaction is 5,6,7,8-tetrahydromethanopterin + formaldehyde = 5,10-methylenetetrahydromethanopterin + H2O. It catalyses the reaction D-ribulose 5-phosphate + formaldehyde = D-arabino-hex-3-ulose 6-phosphate. It participates in carbohydrate biosynthesis; D-ribose 5-phosphate biosynthesis. Functionally, catalyzes the condensation of formaldehyde with tetrahydromethanopterin (H(4)MPT) to 5,10-methylenetetrahydromethanopterin. In terms of biological role, catalyzes the reversible formation of ribulose-5-phosphate and formaldehyde from 3-hexulose-6-phosphate. This chain is Bifunctional enzyme Fae/Hps, found in Methanospirillum hungatei JF-1 (strain ATCC 27890 / DSM 864 / NBRC 100397 / JF-1).